The sequence spans 706 residues: Elongation factor G (706 aa).

In terms of domain architecture, tr-type G spans 8-297 (ERVRNIGIAA…AVIDYLPAPT (290 aa)). GTP contacts are provided by residues 17–24 (AHIDAGKT), 96–100 (DTPGH), and 150–153 (NKMD).

Belongs to the TRAFAC class translation factor GTPase superfamily. Classic translation factor GTPase family. EF-G/EF-2 subfamily.

The protein resides in the cytoplasm. Its function is as follows. Catalyzes the GTP-dependent ribosomal translocation step during translation elongation. During this step, the ribosome changes from the pre-translocational (PRE) to the post-translocational (POST) state as the newly formed A-site-bound peptidyl-tRNA and P-site-bound deacylated tRNA move to the P and E sites, respectively. Catalyzes the coordinated movement of the two tRNA molecules, the mRNA and conformational changes in the ribosome. In Cyanothece sp. (strain PCC 7425 / ATCC 29141), this protein is Elongation factor G.